A 225-amino-acid chain; its full sequence is Ribonuclease T (225 aa).

Positions 1 to 21 are disordered; it reads MSEDHFDDEHEGHGGGGGSRH. An Exonuclease domain is found at 33 to 207; that stretch reads VVVDVETGGF…YDTEKTAELF (175 aa). Asp-36, Glu-38, His-194, and Asp-199 together coordinate Mg(2+). The active-site Proton donor/acceptor is the His-194.

It belongs to the RNase T family. As to quaternary structure, homodimer. Requires Mg(2+) as cofactor.

Trims short 3' overhangs of a variety of RNA species, leaving a one or two nucleotide 3' overhang. Responsible for the end-turnover of tRNA: specifically removes the terminal AMP residue from uncharged tRNA (tRNA-C-C-A). Also appears to be involved in tRNA biosynthesis. This Pseudomonas savastanoi pv. phaseolicola (strain 1448A / Race 6) (Pseudomonas syringae pv. phaseolicola (strain 1448A / Race 6)) protein is Ribonuclease T.